The chain runs to 241 residues: Carboxy-S-adenosyl-L-methionine synthase (241 aa).

Residues Tyr-38, 63–65 (GCS), 88–89 (DN), 116–117 (DI), Asn-131, and Arg-198 each bind S-adenosyl-L-methionine.

This sequence belongs to the class I-like SAM-binding methyltransferase superfamily. Cx-SAM synthase family. Homodimer.

It catalyses the reaction prephenate + S-adenosyl-L-methionine = carboxy-S-adenosyl-L-methionine + 3-phenylpyruvate + H2O. Functionally, catalyzes the conversion of S-adenosyl-L-methionine (SAM) to carboxy-S-adenosyl-L-methionine (Cx-SAM). The polypeptide is Carboxy-S-adenosyl-L-methionine synthase (Pasteurella multocida (strain Pm70)).